The chain runs to 221 residues: Telomere repeats-binding bouquet formation protein 2 (221 aa).

The protein belongs to the TERB2 family. Component of the MAJIN-TERB1-TERB2 complex, composed of MAJIN, TERB1 and TERB2.

It is found in the chromosome. Its subcellular location is the telomere. It localises to the nucleus inner membrane. In terms of biological role, meiosis-specific telomere-associated protein involved in meiotic telomere attachment to the nucleus inner membrane, a crucial step for homologous pairing and synapsis. Component of the MAJIN-TERB1-TERB2 complex, which promotes telomere cap exchange by mediating attachment of telomeric DNA to the inner nuclear membrane and replacement of the protective cap of telomeric chromosomes: in early meiosis, the MAJIN-TERB1-TERB2 complex associates with telomeric DNA and the shelterin/telosome complex. During prophase, the complex matures and promotes release of the shelterin/telosome complex from telomeric DNA. The chain is Telomere repeats-binding bouquet formation protein 2 from Bos taurus (Bovine).